The sequence spans 136 residues: Nucleoside diphosphate kinase (136 aa).

Lys-10, Phe-58, Arg-86, Thr-92, Arg-104, and Asn-114 together coordinate ATP. His-117 serves as the catalytic Pros-phosphohistidine intermediate.

Belongs to the NDK family. In terms of assembly, homotetramer. It depends on Mg(2+) as a cofactor.

It localises to the cytoplasm. It carries out the reaction a 2'-deoxyribonucleoside 5'-diphosphate + ATP = a 2'-deoxyribonucleoside 5'-triphosphate + ADP. The catalysed reaction is a ribonucleoside 5'-diphosphate + ATP = a ribonucleoside 5'-triphosphate + ADP. Functionally, major role in the synthesis of nucleoside triphosphates other than ATP. The ATP gamma phosphate is transferred to the NDP beta phosphate via a ping-pong mechanism, using a phosphorylated active-site intermediate. The sequence is that of Nucleoside diphosphate kinase from Corynebacterium jeikeium (strain K411).